Consider the following 209-residue polypeptide: Large ribosomal subunit protein uL3 (209 aa).

The interval 128–156 is disordered; it reads FAGGSRTHGQSDRLRAPGSVGGSSDPSRT.

The protein belongs to the universal ribosomal protein uL3 family. As to quaternary structure, part of the 50S ribosomal subunit. Forms a cluster with proteins L14 and L19.

In terms of biological role, one of the primary rRNA binding proteins, it binds directly near the 3'-end of the 23S rRNA, where it nucleates assembly of the 50S subunit. This chain is Large ribosomal subunit protein uL3, found in Prosthecochloris aestuarii (strain DSM 271 / SK 413).